Consider the following 157-residue polypeptide: Transcription elongation factor GreA (157 aa).

Residues 12 to 74 adopt a coiled-coil conformation; that stretch reads LKKLEEELEY…TLEAMLKNAK (63 aa).

Belongs to the GreA/GreB family.

In terms of biological role, necessary for efficient RNA polymerase transcription elongation past template-encoded arresting sites. The arresting sites in DNA have the property of trapping a certain fraction of elongating RNA polymerases that pass through, resulting in locked ternary complexes. Cleavage of the nascent transcript by cleavage factors such as GreA or GreB allows the resumption of elongation from the new 3'terminus. GreA releases sequences of 2 to 3 nucleotides. This Caldanaerobacter subterraneus subsp. tengcongensis (strain DSM 15242 / JCM 11007 / NBRC 100824 / MB4) (Thermoanaerobacter tengcongensis) protein is Transcription elongation factor GreA.